Here is a 70-residue protein sequence, read N- to C-terminus: Large ribosomal subunit protein eL38 (70 aa).

The protein belongs to the eukaryotic ribosomal protein eL38 family.

The sequence is that of Large ribosomal subunit protein eL38 (RpL38) from Timarcha balearica.